A 300-amino-acid polypeptide reads, in one-letter code: 2-methylisocitrate lyase (300 aa).

Substrate is bound at residue 53–55 (SGD). Mg(2+) is bound by residues Asp92 and Asp94. Residues 129-130 (CG), Arg162, Glu192, 214-216 (NMT), Arg245, and Arg274 each bind substrate.

The protein belongs to the isocitrate lyase/PEP mutase superfamily. Methylisocitrate lyase family. The cofactor is Mg(2+).

It catalyses the reaction 3-hydroxybutane-1,2,3-tricarboxylate = pyruvate + succinate. Its function is as follows. Involved in the methylcitric acid cycle. Catalyzes the cleavage of 2-methylisocitrate to yield pyruvate and succinate. This chain is 2-methylisocitrate lyase, found in Halalkalibacterium halodurans (strain ATCC BAA-125 / DSM 18197 / FERM 7344 / JCM 9153 / C-125) (Bacillus halodurans).